We begin with the raw amino-acid sequence, 1205 residues long: Plasma membrane calcium-transporting ATPase 1 (1205 aa).

Residues 2–104 (GDMANNSVAY…KTFLQLVWEA (103 aa)) lie on the Cytoplasmic side of the membrane. A calmodulin-binding subdomain A region spans residues 94 to 111 (PKTFLQLVWEALQDVTLI). A helical transmembrane segment spans residues 105 to 125 (LQDVTLIILEIAAVVSLGLSF). Topologically, residues 126-153 (YQPPGGNEALCGSVNVGEEEEESEAGWI) are extracellular. Residues 154–174 (EGAAILLSVVCVVLVTAFNDW) traverse the membrane as a helical segment. The Cytoplasmic segment spans residues 175–351 (SKEKQFRGLQ…KEKSVLQGKL (177 aa)). Residues 296 to 343 (EEEKEKEKKDKKTKAQDGAAMEMQPLKSEDGVDGDEKDKKRSNLPKKE) are disordered. Composition is skewed to basic and acidic residues over residues 300-310 (EKEKKDKKTKA) and 322-343 (KSED…PKKE). A helical membrane pass occupies residues 352-371 (TKLAVQIGKAGLLMSAITVI). Over 372–403 (ILVLYFVIDTSWVQKRPWLAECTPIYIQYFVK) the chain is Extracellular. A helical membrane pass occupies residues 404–424 (FFIIGVTVLVVAVPEGLPLAV). Topologically, residues 425–840 (TISLAYSVKK…RNVYDSISKF (416 aa)) are cytoplasmic. The active-site 4-aspartylphosphate intermediate is the aspartate 460. The Mg(2+) site is built by aspartate 460, threonine 462, and aspartate 782. Residues 841-861 (LQFQLTVNVVAVIVAFTGACI) traverse the membrane as a helical segment. Residues 862–868 (TQDSPLK) lie on the Extracellular side of the membrane. Residues 869-889 (AVQMLWVNLIMDTLASLALAT) traverse the membrane as a helical segment. Residues 890 to 912 (EPPTEALLLRKPYGRNKPLISRT) lie on the Cytoplasmic side of the membrane. Residues 913–933 (MMKNILGHAFYQLVVVFTLLF) form a helical membrane-spanning segment. Topologically, residues 934-956 (AGEKIFDIDSGRNAPLHAPPSEH) are extracellular. Residues 957–976 (YTIVFNTFVMMQLFNEINAR) traverse the membrane as a helical segment. The Cytoplasmic segment spans residues 977–990 (KIHGERNVFEGIFN). The chain crosses the membrane as a helical span at residues 991 to 1012 (NAIFCTIVLGTFVVQIIIVQFG). Residues 1013–1024 (GKPFSCSKLSIE) are Extracellular-facing. Residues 1025–1045 (QWLWSVFLGMGTLLWGQLIST) form a helical membrane-spanning segment. Over 1046–1205 (IPTSRLKFLK…SPLHSLETSL (160 aa)) the chain is Cytoplasmic. Residue threonine 1101 is modified to Phosphothreonine; by PKC. A disordered region spans residues 1145-1205 (PLIDDTDAED…SPLHSLETSL (61 aa)). Polar residues predominate over residues 1183–1205 (TDMNKSATSSSPGSPLHSLETSL).

It belongs to the cation transport ATPase (P-type) (TC 3.A.3) family. Type IIB subfamily.

The protein resides in the cell membrane. The enzyme catalyses Ca(2+)(in) + ATP + H2O = Ca(2+)(out) + ADP + phosphate + H(+). Functionally, catalyzes the hydrolysis of ATP coupled with the transport of calcium from the cytoplasm to the extracellular space thereby maintaining intracellular calcium homeostasis. The sequence is that of Plasma membrane calcium-transporting ATPase 1 from Gallus gallus (Chicken).